A 334-amino-acid chain; its full sequence is Biotin synthase (334 aa).

Positions 55–285 constitute a Radical SAM core domain; it reads GSSGSIHACS…VHPRKIIKIA (231 aa). 3 residues coordinate [4Fe-4S] cluster: Cys-73, Cys-77, and Cys-80. Positions 152, 213, and 283 each coordinate [2Fe-2S] cluster.

This sequence belongs to the radical SAM superfamily. Biotin synthase family. Homodimer. [4Fe-4S] cluster is required as a cofactor. It depends on [2Fe-2S] cluster as a cofactor.

It carries out the reaction (4R,5S)-dethiobiotin + (sulfur carrier)-SH + 2 reduced [2Fe-2S]-[ferredoxin] + 2 S-adenosyl-L-methionine = (sulfur carrier)-H + biotin + 2 5'-deoxyadenosine + 2 L-methionine + 2 oxidized [2Fe-2S]-[ferredoxin]. It functions in the pathway cofactor biosynthesis; biotin biosynthesis; biotin from 7,8-diaminononanoate: step 2/2. In terms of biological role, catalyzes the conversion of dethiobiotin (DTB) to biotin by the insertion of a sulfur atom into dethiobiotin via a radical-based mechanism. In Chlorobium phaeobacteroides (strain DSM 266 / SMG 266 / 2430), this protein is Biotin synthase.